Reading from the N-terminus, the 415-residue chain is uncharacterized protein (415 aa).

Histidine 88 is a binding site for Zn(2+). Aspartate 90 is a catalytic residue. Aspartate 121 serves as a coordination point for Zn(2+). Catalysis depends on glutamate 155, which acts as the Proton acceptor. Positions 156, 185, and 392 each coordinate Zn(2+).

The protein belongs to the peptidase M20A family. Zn(2+) serves as cofactor. Co(2+) is required as a cofactor.

This is an uncharacterized protein from Methanococcus maripaludis (strain DSM 14266 / JCM 13030 / NBRC 101832 / S2 / LL).